The sequence spans 378 residues: Beta sliding clamp (378 aa).

The protein belongs to the beta sliding clamp family. As to quaternary structure, forms a ring-shaped head-to-tail homodimer around DNA which binds and tethers DNA polymerases and other proteins to the DNA. The DNA replisome complex has a single clamp-loading complex (3 tau and 1 each of delta, delta', psi and chi subunits) which binds 3 Pol III cores (1 core on the leading strand and 2 on the lagging strand) each with a beta sliding clamp dimer. Additional proteins in the replisome are other copies of gamma, psi and chi, Ssb, DNA helicase and RNA primase.

The protein localises to the cytoplasm. Confers DNA tethering and processivity to DNA polymerases and other proteins. Acts as a clamp, forming a ring around DNA (a reaction catalyzed by the clamp-loading complex) which diffuses in an ATP-independent manner freely and bidirectionally along dsDNA. Initially characterized for its ability to contact the catalytic subunit of DNA polymerase III (Pol III), a complex, multichain enzyme responsible for most of the replicative synthesis in bacteria; Pol III exhibits 3'-5' exonuclease proofreading activity. The beta chain is required for initiation of replication as well as for processivity of DNA replication. The protein is Beta sliding clamp (dnaN) of Streptococcus pneumoniae serotype 4 (strain ATCC BAA-334 / TIGR4).